A 108-amino-acid polypeptide reads, in one-letter code: Small ribosomal subunit protein uS10 (108 aa).

It belongs to the universal ribosomal protein uS10 family. As to quaternary structure, part of the 30S ribosomal subunit.

Functionally, involved in the binding of tRNA to the ribosomes. The polypeptide is Small ribosomal subunit protein uS10 (Ehrlichia canis (strain Jake)).